A 269-amino-acid chain; its full sequence is Tryptophan synthase alpha chain (269 aa).

Active-site proton acceptor residues include Glu-49 and Asp-60.

Belongs to the TrpA family. As to quaternary structure, tetramer of two alpha and two beta chains.

It carries out the reaction (1S,2R)-1-C-(indol-3-yl)glycerol 3-phosphate + L-serine = D-glyceraldehyde 3-phosphate + L-tryptophan + H2O. It functions in the pathway amino-acid biosynthesis; L-tryptophan biosynthesis; L-tryptophan from chorismate: step 5/5. Functionally, the alpha subunit is responsible for the aldol cleavage of indoleglycerol phosphate to indole and glyceraldehyde 3-phosphate. The polypeptide is Tryptophan synthase alpha chain (Ectopseudomonas mendocina (strain ymp) (Pseudomonas mendocina)).